Consider the following 118-residue polypeptide: UPF0295 protein BT9727_0449 (118 aa).

A run of 2 helical transmembrane segments spans residues 12–32 (IRTF…LGVF) and 43–63 (FMMV…WIGM).

This sequence belongs to the UPF0295 family.

The protein resides in the cell membrane. This is UPF0295 protein BT9727_0449 from Bacillus thuringiensis subsp. konkukian (strain 97-27).